The primary structure comprises 96 residues: Neutrophil defensin 8 (96 aa).

Residues 1–19 (MRTLVILAAILLVALQAQA) form the signal peptide. A propeptide spanning residues 20–66 (EPLQARTDEATAAQEQIPTDNPEVVVSLAWDESLAPKDSVPGLRKNM) is cleaved from the precursor. 3 disulfide bridges follow: cysteine 68–cysteine 96, cysteine 70–cysteine 85, and cysteine 75–cysteine 95.

Belongs to the alpha-defensin family.

The protein localises to the secreted. In terms of biological role, probable antibiotic and antifungal activity. The chain is Neutrophil defensin 8 from Macaca mulatta (Rhesus macaque).